A 143-amino-acid chain; its full sequence is Trypsin inhibitor CMc (143 aa).

The first 24 residues, 1–24, serve as a signal peptide directing secretion; it reads MASCSQHLLSAVAIFSVLAGVATA.

The protein belongs to the protease inhibitor I6 (cereal trypsin/alpha-amylase inhibitor) family. In terms of tissue distribution, endosperm.

The protein localises to the secreted. In terms of biological role, trypsin inhibitor. No alpha-amylase inhibition detected. The protein is Trypsin inhibitor CMc (ITR2) of Hordeum vulgare (Barley).